A 92-amino-acid chain; its full sequence is MKFEAVVRTELGKGASRRLRLAGQFPAVVYGGEAAPVAVALNHDDIVNQMDKPEFYEAITLVIGGEEVKVKPQDVQRHAFKPKVEHMDFIRI.

Belongs to the bacterial ribosomal protein bL25 family. In terms of assembly, part of the 50S ribosomal subunit; part of the 5S rRNA/L5/L18/L25 subcomplex. Contacts the 5S rRNA. Binds to the 5S rRNA independently of L5 and L18.

This is one of the proteins that binds to the 5S RNA in the ribosome where it forms part of the central protuberance. The sequence is that of Large ribosomal subunit protein bL25 from Vibrio vulnificus (strain CMCP6).